Consider the following 151-residue polypeptide: Cell division protein SepF (151 aa).

Residues 17 to 29 are compositionally biased toward acidic residues; sequence DNEDDYQDQEDEQ. The interval 17 to 42 is disordered; that stretch reads DNEDDYQDQEDEQAQQPAPEQPVDNH.

It belongs to the SepF family. As to quaternary structure, homodimer. Interacts with FtsZ.

It is found in the cytoplasm. Functionally, cell division protein that is part of the divisome complex and is recruited early to the Z-ring. Probably stimulates Z-ring formation, perhaps through the cross-linking of FtsZ protofilaments. Its function overlaps with FtsA. The polypeptide is Cell division protein SepF (Lacticaseibacillus casei (strain BL23) (Lactobacillus casei)).